The chain runs to 839 residues: DNA gyrase subunit A (839 aa).

Residues 46–510 (LPDARDGLKP…ISEDIDDEDL (465 aa)) form the Topo IIA-type catalytic domain. Tyr134 functions as the O-(5'-phospho-DNA)-tyrosine intermediate in the catalytic mechanism. The GyrA-box signature appears at 537–543 (QHRGGVG).

This sequence belongs to the type II topoisomerase GyrA/ParC subunit family. As to quaternary structure, heterotetramer, composed of two GyrA and two GyrB chains. In the heterotetramer, GyrA contains the active site tyrosine that forms a transient covalent intermediate with DNA, while GyrB binds cofactors and catalyzes ATP hydrolysis.

The protein resides in the cytoplasm. The enzyme catalyses ATP-dependent breakage, passage and rejoining of double-stranded DNA.. Its function is as follows. A type II topoisomerase that negatively supercoils closed circular double-stranded (ds) DNA in an ATP-dependent manner to modulate DNA topology and maintain chromosomes in an underwound state. Negative supercoiling favors strand separation, and DNA replication, transcription, recombination and repair, all of which involve strand separation. Also able to catalyze the interconversion of other topological isomers of dsDNA rings, including catenanes and knotted rings. Type II topoisomerases break and join 2 DNA strands simultaneously in an ATP-dependent manner. This chain is DNA gyrase subunit A, found in Mycoplasma pneumoniae (strain ATCC 29342 / M129 / Subtype 1) (Mycoplasmoides pneumoniae).